We begin with the raw amino-acid sequence, 278 residues long: Octanoyltransferase LipM (278 aa).

Residues 33–248 enclose the BPL/LPL catalytic domain; that stretch reads KKIPPVIRFY…GFETGLNIHL (216 aa). C150 functions as the Acyl-thioester intermediate in the catalytic mechanism.

The protein belongs to the octanoyltransferase LipM family. Monomer.

It carries out the reaction octanoyl-[ACP] + L-lysyl-[protein] = N(6)-octanoyl-L-lysyl-[protein] + holo-[ACP] + H(+). Its pathway is protein modification; protein lipoylation via endogenous pathway; protein N(6)-(lipoyl)lysine from octanoyl-[acyl-carrier-protein]. Catalyzes the transfer of endogenously produced octanoic acid from octanoyl-acyl-carrier-protein onto the lipoyl domain of GcvH, an intermediate carrier during protein lipoylation. Is also able to catalyze the reverse reaction. Octanoyl-CoA can also act as a substrate although very poorly. Does not display lipoate protein ligase activity, despite its sequence similarity to LplA. This Bacillus subtilis (strain 168) protein is Octanoyltransferase LipM (lipM).